The primary structure comprises 772 residues: DNA ligase (772 aa).

Residues 80–84 (DAEYD), 130–131 (SL), and Glu-160 each bind NAD(+). Lys-162 functions as the N6-AMP-lysine intermediate in the catalytic mechanism. NAD(+) contacts are provided by Arg-183, Glu-220, Lys-336, and Lys-360. Zn(2+)-binding residues include Cys-454, Cys-457, Cys-473, and Cys-479. Positions 685–772 (APEQTLEGLT…NGPQGITTIG (88 aa)) constitute a BRCT domain.

Belongs to the NAD-dependent DNA ligase family. LigA subfamily. Mg(2+) serves as cofactor. Mn(2+) is required as a cofactor.

The catalysed reaction is NAD(+) + (deoxyribonucleotide)n-3'-hydroxyl + 5'-phospho-(deoxyribonucleotide)m = (deoxyribonucleotide)n+m + AMP + beta-nicotinamide D-nucleotide.. In terms of biological role, DNA ligase that catalyzes the formation of phosphodiester linkages between 5'-phosphoryl and 3'-hydroxyl groups in double-stranded DNA using NAD as a coenzyme and as the energy source for the reaction. It is essential for DNA replication and repair of damaged DNA. In Cutibacterium acnes (strain DSM 16379 / KPA171202) (Propionibacterium acnes), this protein is DNA ligase.